We begin with the raw amino-acid sequence, 952 residues long: Isoleucine--tRNA ligase (952 aa).

Positions 58-68 (PYANGDIHIGH) match the 'HIGH' region motif. Residue glutamate 576 participates in L-isoleucyl-5'-AMP binding. A 'KMSKS' region motif is present at residues 617–621 (KMSKS). Lysine 620 contacts ATP. 4 residues coordinate Zn(2+): cysteine 915, cysteine 918, cysteine 935, and cysteine 938.

Belongs to the class-I aminoacyl-tRNA synthetase family. IleS type 1 subfamily. As to quaternary structure, monomer. It depends on Zn(2+) as a cofactor.

The protein localises to the cytoplasm. The enzyme catalyses tRNA(Ile) + L-isoleucine + ATP = L-isoleucyl-tRNA(Ile) + AMP + diphosphate. Its function is as follows. Catalyzes the attachment of isoleucine to tRNA(Ile). As IleRS can inadvertently accommodate and process structurally similar amino acids such as valine, to avoid such errors it has two additional distinct tRNA(Ile)-dependent editing activities. One activity is designated as 'pretransfer' editing and involves the hydrolysis of activated Val-AMP. The other activity is designated 'posttransfer' editing and involves deacylation of mischarged Val-tRNA(Ile). In Aliivibrio fischeri (strain MJ11) (Vibrio fischeri), this protein is Isoleucine--tRNA ligase.